Here is a 395-residue protein sequence, read N- to C-terminus: Transcriptional coactivator yorkie (395 aa).

The segment at 73–100 is disordered; it reads NSFFTPPAPSHSRANSADSTYDAGSQSS. Phosphoserine is present on residues Ser82, Ser88, Ser100, Ser117, and Ser145. A compositionally biased stretch (polar residues) spans 84 to 100; it reads SRANSADSTYDAGSQSS. 2 disordered regions span residues 129-150 and 162-199; these read PSPQ…PASL and AAAA…PASS. The residue at position 146 (Ser146) is a Phosphoserine; by CDK7. Ser149 is subject to Phosphoserine. The segment covering 162-179 has biased composition (low complexity); that stretch reads AAAANNPNANPSSQQQPA. The residue at position 227 (Ser227) is a Phosphoserine. Position 228 is a phosphotyrosine (Tyr228). Ser232 carries the phosphoserine modification. WW domains are found at residues 241–274 and 310–343; these read GALP…DPRI and GPLP…DPRM.

Belongs to the YAP1 family. Interacts (via WW domains) with wts. Interacts (via N-terminus) with sd (via C-terminus) and this interaction enhances the transcriptional activity of sd. The phosphorylated form interacts with 14-3-3epsilon and 14-3-3zeta. Interacts with Ack and ex. Its activity is regulated by multiple phosphorylation events. Phosphorylation at Ser-88, Ser-145 and Ser-227 negatively regulate its activity and restrict its nuclear localization. Wts-mediated phosphorylation at Ser-145 promotes interaction with 14-3-3epsilon and 14-3-3zeta. Phosphorylation at Ser-88 and Ser-227 regulate nuclear localization and activity independent of 14-3-3 association. Phosphorylation at Ser-146 by Cdk7 promotes its stability by preventing ubiquitination by the DCX(DCAF12) complex. Post-translationally, ubiquitinated by the DCX(DCAF12) complex, leading to its degradation. Phosphorylation at Ser-146 by Cdk7 prevents ubiquitination by the DCX(DCAF12) complex.

It is found in the cytoplasm. The protein resides in the nucleus. Functionally, transcriptional coactivator which is the critical downstream regulatory target in the Hippo/SWH (Sav/Wts/Hpo) signaling pathway that plays a pivotal role in organ size control and tumor suppression by restricting proliferation and promoting apoptosis. The core of this pathway is composed of a kinase cascade wherein Hippo (Hpo), in complex with its regulatory protein Salvador (Sav), phosphorylates and activates Warts (Wts) in complex with its regulatory protein Mats, which in turn phosphorylates and inactivates the Yorkie (Yki) oncoprotein. The Hippo/SWH signaling pathway inhibits the activity of the transcriptional complex formed by Scalloped (sd) and Yki and the target genes of this pathway include cyclin-E (cycE), diap1 and bantam. Regulates the expression of G1/S-specific CycE and diap1, thereby promoting cell proliferation and inhibiting apoptosis. Required for transcriptional activity of sd in wing imaginal disks. Induces expression of expression of vestigial (vg) in wing and haltere disks and the expression of transcription factor E2f (E2f). This Drosophila melanogaster (Fruit fly) protein is Transcriptional coactivator yorkie (yki).